The chain runs to 431 residues: MIDIKLLEKKAETGTSYYDEYKQGLVNRGASTEVLEQIMELNKKRKELITQAETAKASQNKLSGEIGKIKREGGDASAILAEVDVLKTQVKELEAKAAEADQQVTNLALVIPNKPHSSVPVGSSEKDNKEIKVVGTPTQFSFKAKEHWELGEALNIIDFERAGKTTGTRFAFLKGAAAQMERALIQFMMDKHSMKHGYTEMIPPFMVNSNSLLGTGNFPKFKEDVFHLEGSDLYLIPTAEVPVTNYYNNEILDEKDLPQSFCAYSPCFRSEAGSAGRDTKGLIRQHQFDKVELMVFAHPDKSHEVHEALTSHAEQILMDLELPFRRVLLCTGDMGFGSAKTYDLEVWLPGQNAYREISSCSNFEDFQARRANIRFRSAGGKPQFVHTLNGSALAVGRTLVAILENYQREDGSVGIPKALQPYMGGRTEIRK.

238–240 (TAE) lines the L-serine pocket. ATP is bound at residue 269-271 (RSE). L-serine is bound at residue Glu292. 356–359 (EISS) contacts ATP. Residue Ser391 participates in L-serine binding.

It belongs to the class-II aminoacyl-tRNA synthetase family. Type-1 seryl-tRNA synthetase subfamily. Homodimer. The tRNA molecule binds across the dimer.

It is found in the cytoplasm. The enzyme catalyses tRNA(Ser) + L-serine + ATP = L-seryl-tRNA(Ser) + AMP + diphosphate + H(+). It catalyses the reaction tRNA(Sec) + L-serine + ATP = L-seryl-tRNA(Sec) + AMP + diphosphate + H(+). It participates in aminoacyl-tRNA biosynthesis; selenocysteinyl-tRNA(Sec) biosynthesis; L-seryl-tRNA(Sec) from L-serine and tRNA(Sec): step 1/1. Functionally, catalyzes the attachment of serine to tRNA(Ser). Is also able to aminoacylate tRNA(Sec) with serine, to form the misacylated tRNA L-seryl-tRNA(Sec), which will be further converted into selenocysteinyl-tRNA(Sec). The sequence is that of Serine--tRNA ligase from Bdellovibrio bacteriovorus (strain ATCC 15356 / DSM 50701 / NCIMB 9529 / HD100).